Consider the following 267-residue polypeptide: tRNA-cytidine(32) 2-sulfurtransferase (267 aa).

A PP-loop motif motif is present at residues 37 to 42; the sequence is SGGKDS. The [4Fe-4S] cluster site is built by C112, C115, and C203.

The protein belongs to the TtcA family. Homodimer. Mg(2+) serves as cofactor. [4Fe-4S] cluster is required as a cofactor.

It localises to the cytoplasm. It carries out the reaction cytidine(32) in tRNA + S-sulfanyl-L-cysteinyl-[cysteine desulfurase] + AH2 + ATP = 2-thiocytidine(32) in tRNA + L-cysteinyl-[cysteine desulfurase] + A + AMP + diphosphate + H(+). It participates in tRNA modification. Its function is as follows. Catalyzes the ATP-dependent 2-thiolation of cytidine in position 32 of tRNA, to form 2-thiocytidine (s(2)C32). The sulfur atoms are provided by the cysteine/cysteine desulfurase (IscS) system. The protein is tRNA-cytidine(32) 2-sulfurtransferase of Dichelobacter nodosus (strain VCS1703A).